The following is a 208-amino-acid chain: LexA repressor (208 aa).

The H-T-H motif DNA-binding region spans 29–49; it reads IREIGDSLNINSTSTVHNNIL. Active-site for autocatalytic cleavage activity residues include serine 131 and lysine 168.

It belongs to the peptidase S24 family. Homodimer.

The enzyme catalyses Hydrolysis of Ala-|-Gly bond in repressor LexA.. In terms of biological role, represses a number of genes involved in the response to DNA damage (SOS response), including recA and lexA. In the presence of single-stranded DNA, RecA interacts with LexA causing an autocatalytic cleavage which disrupts the DNA-binding part of LexA, leading to derepression of the SOS regulon and eventually DNA repair. The protein is LexA repressor of Finegoldia magna (strain ATCC 29328 / DSM 20472 / WAL 2508) (Peptostreptococcus magnus).